Consider the following 373-residue polypeptide: uncharacterized protein (373 aa).

The 155-residue stretch at 14–168 (KKIVNKIIDE…LMDTPGVLEM (155 aa)) folds into the CP-type G domain. GTP is bound at residue 117-124 (GYPNVGKS).

Belongs to the TRAFAC class YlqF/YawG GTPase family.

This is an uncharacterized protein from Methanocaldococcus jannaschii (strain ATCC 43067 / DSM 2661 / JAL-1 / JCM 10045 / NBRC 100440) (Methanococcus jannaschii).